Reading from the N-terminus, the 232-residue chain is Ribonuclease P protein component 3 (232 aa).

It belongs to the eukaryotic/archaeal RNase P protein component 3 family. In terms of assembly, consists of a catalytic RNA component and at least 5 protein subunits.

Its subcellular location is the cytoplasm. The catalysed reaction is Endonucleolytic cleavage of RNA, removing 5'-extranucleotides from tRNA precursor.. In terms of biological role, part of ribonuclease P, a protein complex that generates mature tRNA molecules by cleaving their 5'-ends. The chain is Ribonuclease P protein component 3 from Methanococcus maripaludis (strain DSM 14266 / JCM 13030 / NBRC 101832 / S2 / LL).